The following is a 487-amino-acid chain: Beta-barrel assembly-enhancing protease (487 aa).

A signal peptide spans 1-27 (MFRQLKKNLVATLIAALALGQVAPAFA). Residue His136 coordinates Zn(2+). The active site involves Glu137. Residues His140 and Glu201 each coordinate Zn(2+). The Proton donor role is filled by Asp205. 2 TPR repeats span residues 309 to 342 (HAAQ…EPNN) and 427 to 460 (DQEL…AKLG).

This sequence belongs to the peptidase M48 family. BepA subfamily. It depends on Zn(2+) as a cofactor.

The protein resides in the periplasm. Functionally, functions both as a chaperone and a metalloprotease. Maintains the integrity of the outer membrane by promoting either the assembly or the elimination of outer membrane proteins, depending on their folding state. This Salmonella typhi protein is Beta-barrel assembly-enhancing protease.